A 460-amino-acid chain; its full sequence is MALWGGRFESGASSMFKQVNDSLPFDQVMASQDIQGSISWSRALQKAGVLTADEQAQLEGALSELKAQADAGELDFNASSEEDIHSFVEAALIEKLGDIGRKLHTGRSRNDQVATDFRLWVREHIASLRADVLGVIKSLLNAASRHQEAIIPGYTHLQRAQPIHFAHWCLAYVEMLKRDLSRLDDLKVRMNQCPLGSGALAGTTFPVDRHAIAEELGFDSPCLNSLDAVSDRDFVLELLFVASTSMMHLSRLAEDMIFYNSGEAGFLQLGDSVTSGSSLMPQKKNPDALELMRGKCGRVFGALQALLVTMKGLPLAYNKDMQEDKEGAIDTVNQWHICLCIASEVLDSLQLNEERCRVAAAQGFSNATELADYLVGKGVPFRTGHDIAGRVVLQAIDKGCAIEDLPLSDLQAISDKIEDDVYPVLQLEYGVNQRNILGGTSKETVTKALYQELENLDKQG.

Belongs to the lyase 1 family. Argininosuccinate lyase subfamily.

The protein localises to the cytoplasm. It carries out the reaction 2-(N(omega)-L-arginino)succinate = fumarate + L-arginine. It participates in amino-acid biosynthesis; L-arginine biosynthesis; L-arginine from L-ornithine and carbamoyl phosphate: step 3/3. This is Argininosuccinate lyase from Alteromonas mediterranea (strain DSM 17117 / CIP 110805 / LMG 28347 / Deep ecotype).